We begin with the raw amino-acid sequence, 488 residues long: Malonate-semialdehyde dehydrogenase (488 aa).

Residues Ala-150, Phe-152, Lys-176, Glu-179, Arg-180, Ser-229, and Thr-251 each contribute to the NAD(+) site. The active-site Nucleophile is Cys-284. Glu-382 provides a ligand contact to NAD(+).

Belongs to the aldehyde dehydrogenase family. IolA subfamily. Homotetramer.

The enzyme catalyses 3-oxopropanoate + NAD(+) + CoA + H2O = hydrogencarbonate + acetyl-CoA + NADH + H(+). It carries out the reaction 2-methyl-3-oxopropanoate + NAD(+) + CoA + H2O = propanoyl-CoA + hydrogencarbonate + NADH + H(+). The protein operates within polyol metabolism; myo-inositol degradation into acetyl-CoA; acetyl-CoA from myo-inositol: step 7/7. Catalyzes the oxidation of malonate semialdehyde (MSA) and methylmalonate semialdehyde (MMSA) into acetyl-CoA and propanoyl-CoA, respectively. Is involved in a myo-inositol catabolic pathway. Bicarbonate, and not CO2, is the end-product of the enzymatic reaction. This chain is Malonate-semialdehyde dehydrogenase, found in Listeria innocua serovar 6a (strain ATCC BAA-680 / CLIP 11262).